Here is a 307-residue protein sequence, read N- to C-terminus: Malate dehydrogenase (307 aa).

NAD(+) contacts are provided by residues 8 to 13 and aspartate 32; that span reads GAGNVG. Residues arginine 81 and arginine 87 each contribute to the substrate site. NAD(+)-binding positions include asparagine 94 and 117–119; that span reads VSN. 2 residues coordinate substrate: asparagine 119 and arginine 150. The active-site Proton acceptor is histidine 174.

Belongs to the LDH/MDH superfamily. MDH type 3 family.

The catalysed reaction is (S)-malate + NAD(+) = oxaloacetate + NADH + H(+). In terms of biological role, catalyzes the reversible oxidation of malate to oxaloacetate. This is Malate dehydrogenase from Dehalococcoides mccartyi (strain CBDB1).